The primary structure comprises 86 residues: Cardiotoxin homolog TA-ctx-like (86 aa).

Residues 1–21 (MKTLLLTLVVLTIACLDLGYT) form the signal peptide. 4 cysteine pairs are disulfide-bonded: Cys-24-Cys-45, Cys-38-Cys-62, Cys-66-Cys-78, and Cys-79-Cys-84.

This sequence belongs to the three-finger toxin family. Short-chain subfamily. Orphan group IX sub-subfamily. As to expression, expressed by the venom gland.

It localises to the secreted. This chain is Cardiotoxin homolog TA-ctx-like, found in Bungarus multicinctus (Many-banded krait).